The sequence spans 483 residues: MSAPSSPRVTRIAPSPTGDPHVGTAYIGLFNHTLARQSGGRFILRVEDTDRNRYVPDSEKRIFQMMQWLNLTPDESPLQGGPNGPYRQSERFDLYGDYARQLVQSGHAYYAFETSDELAALREEAQKAGHVIAIPSRDLGAAQAQARVDAGEPAVIRLKVDRDGETVVNDLLRDPIHFANKEIDDKVLLKADGFPTYHLANVVDDRLMQVTHVVRAEEWITSTPIHVLLYRAFGWPEPVFAHMPLLRNADKSKISKRKNPTSVEWYQNQGFLPEAMLNFLATMGWTHPDGQEIFDLAEFERVFRLEDVTLGGPVFDLAKLRWYNGKYLREVLSEDDVARRLHAFLMQNKVTLPSVDGPQDPYFRAVTHLMIPRLEVFADFMDKTLYFWSEDYPVNEKAQKAIDAGKELLPELAARLKNLPTFDAASIKEMFHAYAEEKGLKMGKVMPPIRAAVAGTMESPDLPEMLEALGRERVLARVEKAAR.

The 'HIGH' region signature appears at 14-24 (PSPTGDPHVGT). Residues 253–257 (KISKR) carry the 'KMSKS' region motif. Position 256 (Lys-256) interacts with ATP.

This sequence belongs to the class-I aminoacyl-tRNA synthetase family. Glutamate--tRNA ligase type 1 subfamily. As to quaternary structure, monomer.

Its subcellular location is the cytoplasm. It carries out the reaction tRNA(Glu) + L-glutamate + ATP = L-glutamyl-tRNA(Glu) + AMP + diphosphate. Catalyzes the attachment of glutamate to tRNA(Glu) in a two-step reaction: glutamate is first activated by ATP to form Glu-AMP and then transferred to the acceptor end of tRNA(Glu). In Deinococcus radiodurans (strain ATCC 13939 / DSM 20539 / JCM 16871 / CCUG 27074 / LMG 4051 / NBRC 15346 / NCIMB 9279 / VKM B-1422 / R1), this protein is Glutamate--tRNA ligase.